Reading from the N-terminus, the 403-residue chain is Mitochondrial intermembrane space import and assembly protein 40 (403 aa).

The transit peptide at 1-31 (MLRNLVVRNACRNRPSIQVARGLCRHQTRRL) directs the protein to the mitochondrion. Over 33 to 46 (ASSPQFGRNSNQEK) the chain is Mitochondrial matrix. The chain crosses the membrane as a helical; Signal-anchor for type II membrane protein span at residues 47 to 66 (TAGFIMGILSMAGALYFIAP). At 67–403 (NRKPLFASRK…KEPLNEESKP (337 aa)) the chain is on the mitochondrial intermembrane side. 5 stretches are compositionally biased toward basic and acidic residues: residues 75 to 84 (RKVESDKTAE), 101 to 118 (NNSK…KNDE), 147 to 168 (EDNK…KDDE), 206 to 230 (SEKK…KTTT), and 262 to 271 (EELRKQEEKQ). The tract at residues 75 to 292 (RKVESDKTAE…GAYNPDTGEI (218 aa)) is disordered. Cystine bridges form between cysteine 296/cysteine 298, cysteine 307/cysteine 340, and cysteine 317/cysteine 330. One can recognise a CHCH domain in the interval 304 to 348 (HGPCGEEFKSAFSCFVYSEAEPKGIDCVEKFQHMQDCFRKYPEHY). 2 consecutive short sequence motifs (cx9C motif) follow at residues 307–317 (CGEEFKSAFSC) and 330–340 (CVEKFQHMQDC). The interval 351–403 (QLKETSDDEEPQDKVKVNTIESAPNVSSAKENAAKKAEQSDVKKEPLNEESKP) is disordered. Polar residues predominate over residues 369–378 (TIESAPNVSS). Over residues 382 to 403 (NAAKKAEQSDVKKEPLNEESKP) the composition is skewed to basic and acidic residues.

Monomer. Interacts with the FAD-linked sulfhydryl oxidase ERV1 and with the substrate proteins COX17, TIM9, and TIM13, forming transient intermolecular disulfide bridges. Interacts with FCJ1. Cu(2+) is required as a cofactor. Requires Zn(2+) as cofactor.

The protein resides in the mitochondrion inner membrane. Its function is as follows. Required for the import and folding of small cysteine-containing proteins (small Tim) in the mitochondrial intermembrane space (IMS). Forms a redox cycle with ERV1 that involves a disulfide relay system. Precursor proteins to be imported into the IMS are translocated in their reduced form into the mitochondria. The oxidized form of MIA40 forms a transient intermolecular disulfide bridge with the reduced precursor protein, resulting in oxidation of the precursor protein that now contains an intramolecular disulfide bond and is able to undergo folding in the IMS. Reduced MIA40 is reoxidized by FAD-linked sulfhydryl oxidase ERV1. In Saccharomyces cerevisiae (strain ATCC 204508 / S288c) (Baker's yeast), this protein is Mitochondrial intermembrane space import and assembly protein 40 (MIA40).